The chain runs to 307 residues: Auxiliary protein GraX (307 aa).

As to quaternary structure, homodimer. Interacts with GraR and GraS.

Functionally, plays a role in resistance against cationic antimicrobial peptides (CAMPs). Facilitates the activation of GraS to transduce the signal to GraR. The protein is Auxiliary protein GraX (graX) of Staphylococcus aureus (strain NCTC 8325 / PS 47).